Reading from the N-terminus, the 435-residue chain is Serine--tRNA ligase (435 aa).

238–240 (TAE) is an L-serine binding site. 269-271 (RAE) lines the ATP pocket. Position 292 (Glu292) interacts with L-serine. 356 to 359 (EISS) provides a ligand contact to ATP. Ser392 is an L-serine binding site.

Belongs to the class-II aminoacyl-tRNA synthetase family. Type-1 seryl-tRNA synthetase subfamily. As to quaternary structure, homodimer. The tRNA molecule binds across the dimer.

It is found in the cytoplasm. It catalyses the reaction tRNA(Ser) + L-serine + ATP = L-seryl-tRNA(Ser) + AMP + diphosphate + H(+). The catalysed reaction is tRNA(Sec) + L-serine + ATP = L-seryl-tRNA(Sec) + AMP + diphosphate + H(+). It participates in aminoacyl-tRNA biosynthesis; selenocysteinyl-tRNA(Sec) biosynthesis; L-seryl-tRNA(Sec) from L-serine and tRNA(Sec): step 1/1. In terms of biological role, catalyzes the attachment of serine to tRNA(Ser). Is also able to aminoacylate tRNA(Sec) with serine, to form the misacylated tRNA L-seryl-tRNA(Sec), which will be further converted into selenocysteinyl-tRNA(Sec). The sequence is that of Serine--tRNA ligase from Methylobacterium sp. (strain 4-46).